Here is a 250-residue protein sequence, read N- to C-terminus: Indole-3-glycerol phosphate synthase (250 aa).

This sequence belongs to the TrpC family.

The enzyme catalyses 1-(2-carboxyphenylamino)-1-deoxy-D-ribulose 5-phosphate + H(+) = (1S,2R)-1-C-(indol-3-yl)glycerol 3-phosphate + CO2 + H2O. It participates in amino-acid biosynthesis; L-tryptophan biosynthesis; L-tryptophan from chorismate: step 4/5. The protein is Indole-3-glycerol phosphate synthase of Bacillus pumilus (strain SAFR-032).